The chain runs to 292 residues: MTFTVTRERAQWVHDMARARDGLPYAYGGAFTNNPRVSTDCSGLVLQTGAWYGGRTDWVGNRYGSTESFRLDHKIVYDLGFKRMPRGGPAALPIKPVMLVGLQHGGGGVYSHTACTLMTMDHPGGPVKMSDRGVDWESHGNRNGVGVELYEGARAWNDPLFHDFWYLDAVLEDEGDDDELADPVLGKMIREIHACLFNQTASTSDLATPGEGAIWQLHQKIHSIDGMLHPIHAERRARAGDLGELHRIVLAAKGLGVKRDEVTKRVYQSILADIERDNPEVLQRYIAERGGL.

Belongs to the L5likevirus endolysin A protein family.

Its function is as follows. Endolysin that degrades host peptidoglycans and participates with the holin protein in the sequential events which lead to the programmed host cell lysis releasing the mature viral particles. Once the holin has permeabilized the host cell membrane, the endolysin can reach the periplasm and break down the peptidoglycan layer. This is Endolysin A (10) from Mycobacterium phage L5 (Mycobacteriophage L5).